The chain runs to 207 residues: Ribosomal RNA small subunit methyltransferase G (207 aa).

Residues glycine 71, phenylalanine 76, 122–123, and arginine 135 contribute to the S-adenosyl-L-methionine site; that span reads AE.

The protein belongs to the methyltransferase superfamily. RNA methyltransferase RsmG family.

Its subcellular location is the cytoplasm. Functionally, specifically methylates the N7 position of a guanine in 16S rRNA. The polypeptide is Ribosomal RNA small subunit methyltransferase G (Cytophaga hutchinsonii (strain ATCC 33406 / DSM 1761 / CIP 103989 / NBRC 15051 / NCIMB 9469 / D465)).